Consider the following 166-residue polypeptide: Small ribosomal subunit protein eS10 (166 aa).

The segment at arginine 95–glutamine 166 is disordered. A compositionally biased stretch (basic and acidic residues) spans threonine 98–arginine 129. A compositionally biased stretch (low complexity) spans alanine 143 to arginine 154. The span at glycine 155–glutamine 166 shows a compositional bias: gly residues.

This sequence belongs to the eukaryotic ribosomal protein eS10 family. Component of the small ribosomal subunit.

It localises to the cytoplasm. Its subcellular location is the nucleus. It is found in the nucleolus. Component of the 40S ribosomal subunit. The ribosome is a large ribonucleoprotein complex responsible for the synthesis of proteins in the cell. The polypeptide is Small ribosomal subunit protein eS10 (rps10) (Ictalurus punctatus (Channel catfish)).